A 110-amino-acid chain; its full sequence is Protein RnfH (110 aa).

The tract at residues 86 to 110 (RKRAAQQAKDQEEKKKAEKSANKEN) is disordered. A compositionally biased stretch (basic and acidic residues) spans 94-110 (KDQEEKKKAEKSANKEN).

The protein belongs to the UPF0125 (RnfH) family.

The protein is Protein RnfH of Mannheimia succiniciproducens (strain KCTC 0769BP / MBEL55E).